The following is a 341-amino-acid chain: Glycerol-3-phosphate dehydrogenase [NAD(P)+] (341 aa).

Ser-13, Trp-14, and Lys-108 together coordinate NADPH. 3 residues coordinate sn-glycerol 3-phosphate: Lys-108, Gly-139, and Ser-141. An NADPH-binding site is contributed by Ala-143. The sn-glycerol 3-phosphate site is built by Lys-194, Asp-247, Ser-257, Arg-258, and Asn-259. Residue Lys-194 is the Proton acceptor of the active site. Arg-258 serves as a coordination point for NADPH. NADPH is bound by residues Val-282 and Glu-284.

The protein belongs to the NAD-dependent glycerol-3-phosphate dehydrogenase family.

The protein localises to the cytoplasm. It carries out the reaction sn-glycerol 3-phosphate + NAD(+) = dihydroxyacetone phosphate + NADH + H(+). It catalyses the reaction sn-glycerol 3-phosphate + NADP(+) = dihydroxyacetone phosphate + NADPH + H(+). Its pathway is membrane lipid metabolism; glycerophospholipid metabolism. Its function is as follows. Catalyzes the reduction of the glycolytic intermediate dihydroxyacetone phosphate (DHAP) to sn-glycerol 3-phosphate (G3P), the key precursor for phospholipid synthesis. The polypeptide is Glycerol-3-phosphate dehydrogenase [NAD(P)+] (Lactococcus lactis subsp. lactis (strain IL1403) (Streptococcus lactis)).